The primary structure comprises 388 residues: S-adenosylmethionine synthase (388 aa).

Residue histidine 16 participates in ATP binding. Aspartate 18 contacts Mg(2+). Glutamate 44 contributes to the K(+) binding site. L-methionine is bound by residues glutamate 57 and glutamine 100. Residues 100–110 are flexible loop; the sequence is QSPEIAQGVDR. Residues 165–167, aspartate 240, 246–247, alanine 263, and lysine 267 contribute to the ATP site; these read DAK and RK. Aspartate 240 provides a ligand contact to L-methionine. Residue lysine 271 participates in L-methionine binding.

This sequence belongs to the AdoMet synthase family. Homotetramer; dimer of dimers. Mg(2+) serves as cofactor. The cofactor is K(+).

The protein resides in the cytoplasm. It catalyses the reaction L-methionine + ATP + H2O = S-adenosyl-L-methionine + phosphate + diphosphate. It participates in amino-acid biosynthesis; S-adenosyl-L-methionine biosynthesis; S-adenosyl-L-methionine from L-methionine: step 1/1. Its function is as follows. Catalyzes the formation of S-adenosylmethionine (AdoMet) from methionine and ATP. The overall synthetic reaction is composed of two sequential steps, AdoMet formation and the subsequent tripolyphosphate hydrolysis which occurs prior to release of AdoMet from the enzyme. The chain is S-adenosylmethionine synthase from Acinetobacter baylyi (strain ATCC 33305 / BD413 / ADP1).